We begin with the raw amino-acid sequence, 247 residues long: Probable transcriptional regulatory protein Syncc9605_2132 (247 aa).

It belongs to the TACO1 family.

The protein resides in the cytoplasm. The protein is Probable transcriptional regulatory protein Syncc9605_2132 of Synechococcus sp. (strain CC9605).